We begin with the raw amino-acid sequence, 108 residues long: Iron-sulfur cluster assembly protein CyaY (108 aa).

It belongs to the frataxin family.

Involved in iron-sulfur (Fe-S) cluster assembly. May act as a regulator of Fe-S biogenesis. This Burkholderia cenocepacia (strain ATCC BAA-245 / DSM 16553 / LMG 16656 / NCTC 13227 / J2315 / CF5610) (Burkholderia cepacia (strain J2315)) protein is Iron-sulfur cluster assembly protein CyaY.